The sequence spans 1071 residues: Myosin IF heavy chain (1071 aa).

In terms of domain architecture, Myosin motor spans 40–736; sequence VGLTDMCFLE…TLFHFEELRQ (697 aa). 134–141 contributes to the ATP binding site; that stretch reads GESGSGKT. Positions 610-632 are actin-binding; sequence INDLIGKLNTCQPHYIRCIKSNE. In terms of domain architecture, IQ spans 739-768; that stretch reads LPSIVITIQRVWRGYKVRKWYKQELQRLRE. The TH1 domain occupies 870–1069; sequence SRKKEWDCRR…KGNTAIVYYN (200 aa).

Belongs to the TRAFAC class myosin-kinesin ATPase superfamily. Myosin family. Myosin I heavy chain is single-headed. Dimer of a heavy and a light chain. Inability to self-assemble into filaments.

Its function is as follows. Myosin is a protein that binds to actin and has ATPase activity that is activated by actin. The chain is Myosin IF heavy chain (myoF) from Dictyostelium discoideum (Social amoeba).